Consider the following 289-residue polypeptide: Heterokaryon incompatibility protein s (289 aa).

The segment at 1–227 (MSEPFGIVAG…KIDAIVGRNS (227 aa)) is globular domain. Positions 218 to 289 (KIDAIVGRNS…EYGGKGFWDN (72 aa)) are prion domain (PrD).

Homodimer. Forms heterodimers with het-S.

Its subcellular location is the cytoplasm. Functionally, responsible for heterokaryon incompatibility, a process that ensures that during spontaneous, vegetative cell fusion only compatible cells from the same colony survive (non-self-recognition). Forms a prion for the non-Mendelian trait [het-s]. Interacts with het-S from incompatible cells to trigger a lethal reaction that prevents the formation of viable heterokaryons. It is unknown if the native, soluble protein has a cellular function. This is Heterokaryon incompatibility protein s (het-s) from Podospora anserina (Pleurage anserina).